The sequence spans 1070 residues: DNA-directed RNA polymerase subunit beta (1070 aa).

The protein belongs to the RNA polymerase beta chain family. As to quaternary structure, in plastids the minimal PEP RNA polymerase catalytic core is composed of four subunits: alpha, beta, beta', and beta''. When a (nuclear-encoded) sigma factor is associated with the core the holoenzyme is formed, which can initiate transcription.

It is found in the plastid. Its subcellular location is the chloroplast. The catalysed reaction is RNA(n) + a ribonucleoside 5'-triphosphate = RNA(n+1) + diphosphate. Functionally, DNA-dependent RNA polymerase catalyzes the transcription of DNA into RNA using the four ribonucleoside triphosphates as substrates. The polypeptide is DNA-directed RNA polymerase subunit beta (Liriodendron tulipifera (Tuliptree)).